The sequence spans 1051 residues: MPPPPHIKPENVLKRAQELIAVGQAPAALNVLHEHVTSKRTRSSPIASLEPVMLLFVELCVDLRKGKAAKDGLYQYKNIAQNTNVGTIEVVLKKFIELAEKKVTEAQAKADEIQSSLESAAPSSNVEDLEAIETPETILLATVSGEQSRDRTDRAVVTPWLKFLWETYRTVLEILKNNARLEVMYQTTALQAFQFCLKYTRKTEFRRLCELLRNHVQNAAKYSAQMHAINLSDPDTLQRHLDTRFQQLNVAVELELWQEAFRSIEDIHTLLSLSKRPAKNVMMANYYEKLARIFLVSENYLFHAAAWNRYYNLLRQSAAALAAGQGTKKENPSVTEADMTKAASFVLLSALSIPVISTSRSRGALVDVDEARKNKNARLTNLLGMAQPPSRAVLFRDALNKGLLKRARPEIRDLYNILEVDFHPLSICKKITPILKQIGADPEMEKYVLPLQQVILTRLFQQLSQVYESVELKFVYELAQFPDPFQITPAMIEKFIMNGCKKGDLAIRVDHTAGVLTFDTDIFSSAKALHSGSAAGSAESEVGSVQRLQNTPAEIARLQLTRLAKTLHVTCMYVDPSYNEARIQAKKAAQARAEAGAAKEHEETLARRVLIEKKKEAATDALQRKQREEETRKRIRNQQLQEAEKQRLLDEQREREKKRLRDEQERIRQQELKKQLEELKSGVKGIDISEIDLEDLDANRLRAIKLAQLEKEKNELNERIRTTAKRIDHLERAFRREELKHIPEDYEAQKKRDMELYEAIKAETLKEAEEKHKEAVALKHRLSRLVPVFSSFRKEVSEKRHEEFEKRRKAAEREFEAKKKQRIKEVQERRRRERAEREAEERRRKEEEERAKREEEERIAKEEERRRILAEEKAKREEERKRLDEIAQRQKQREEEAEARRAARKSGLAEPPTRAAELERPVERTAPRLNLVSRTGSGPSWRERQAAKEAAGAAPAPAAAEAPKEEVQLPRRTGGYVPPHLRSGANASPATPPSNGPAPEKYVPRHMRESSSSQPPSRTQTPPAAAPASSDKPEASPAPQKWVPRWKQQQQ.

Positions 92-121 form a coiled coil; that stretch reads LKKFIELAEKKVTEAQAKADEIQSSLESAA. The 185-residue stretch at 339-523 folds into the PCI domain; sequence MTKAASFVLL…GVLTFDTDIF (185 aa). Residues 608–905 adopt a coiled-coil conformation; it reads RVLIEKKKEA…EAEARRAARK (298 aa). 4 stretches are compositionally biased toward basic and acidic residues: residues 617–632, 642–664, 794–901, and 916–926; these read AATD…EETR, EAEK…RDEQ, KEVS…EARR, and AELERPVERTA. 2 disordered regions span residues 617-664 and 794-1051; these read AATD…RDEQ and KEVS…QQQQ. Low complexity-rich tracts occupy residues 948 to 961 and 1010 to 1039; these read KEAA…AAAE and SSSS…SPAP.

It belongs to the eIF-3 subunit A family. In terms of assembly, component of the eukaryotic translation initiation factor 3 (eIF-3) complex.

The protein localises to the cytoplasm. In terms of biological role, RNA-binding component of the eukaryotic translation initiation factor 3 (eIF-3) complex, which is involved in protein synthesis of a specialized repertoire of mRNAs and, together with other initiation factors, stimulates binding of mRNA and methionyl-tRNAi to the 40S ribosome. The eIF-3 complex specifically targets and initiates translation of a subset of mRNAs involved in cell proliferation. This chain is Eukaryotic translation initiation factor 3 subunit A (tif32), found in Aspergillus fumigatus (strain CBS 144.89 / FGSC A1163 / CEA10) (Neosartorya fumigata).